A 699-amino-acid polypeptide reads, in one-letter code: Ubiquitin-like modifier-activating enzyme ATG7 (699 aa).

The GXGXXG motif motif lies at 370–375; the sequence is GAGTLG. Residue cysteine 550 is the Glycyl thioester intermediate of the active site. Residues 653–691 form a homodimerization region; sequence ALASRDYVAELSGLAEVQRLAEKAAAEMQWSEDEEGMGE.

The protein belongs to the ATG7 family. Homodimer. Interacts with ATG8 through a thioester bond between Cys-550 and the C-terminal Gly of ATG8 and with ATG12 through a thioester bond between Cys-550 and the C-terminal Gly of ATG12. Also interacts with ATG3.

The protein localises to the cytoplasm. The protein resides in the preautophagosomal structure. E1-like activating enzyme involved in the 2 ubiquitin-like systems required for cytoplasm to vacuole transport (Cvt) and autophagy. Activates ATG12 for its conjugation with ATG5 and ATG8 for its conjugation with phosphatidylethanolamine. Both systems are needed for the ATG8 association to Cvt vesicles and autophagosomes membranes. Autophagy is essential for maintenance of amino acid levels and protein synthesis under nitrogen starvation. Required for selective autophagic degradation of the nucleus (nucleophagy) as well as for mitophagy which contributes to regulate mitochondrial quantity and quality by eliminating the mitochondria to a basal level to fulfill cellular energy requirements and preventing excess ROS production. Required for normal mycelial growth and conidiogenesis. The sequence is that of Ubiquitin-like modifier-activating enzyme ATG7 from Sordaria macrospora (strain ATCC MYA-333 / DSM 997 / K(L3346) / K-hell).